The primary structure comprises 418 residues: Gamma-glutamyl phosphate reductase (418 aa).

Belongs to the gamma-glutamyl phosphate reductase family.

Its subcellular location is the cytoplasm. The enzyme catalyses L-glutamate 5-semialdehyde + phosphate + NADP(+) = L-glutamyl 5-phosphate + NADPH + H(+). It participates in amino-acid biosynthesis; L-proline biosynthesis; L-glutamate 5-semialdehyde from L-glutamate: step 2/2. Its function is as follows. Catalyzes the NADPH-dependent reduction of L-glutamate 5-phosphate into L-glutamate 5-semialdehyde and phosphate. The product spontaneously undergoes cyclization to form 1-pyrroline-5-carboxylate. This Nitrosococcus oceani (strain ATCC 19707 / BCRC 17464 / JCM 30415 / NCIMB 11848 / C-107) protein is Gamma-glutamyl phosphate reductase.